Consider the following 743-residue polypeptide: MEKQSNDAAVAGAPNDHGAAKCPVAHTAHGRRNRDWWPDALDISTLHRNSSLSDPMGSGFDYAMEFESLDLQAVIKDLHALMTDSQDWWPADFGHYGGLMIRMAWHSAGTYRITDGRGGAGAGQQRFAPLNSWPDNANLDKARRLLWPVKQKYGDKISWADLMVLAGNVALESMGFKTFGFAGGRSDVWEPEELYWGPEGTWLGDERYSGERQLSEPLGAVQMGLIYVNPEGPNGNPDPVAAAKDIRETFFRMAMNDEETVALIAGGHTFGKTHGAGDPSLVGPDPESGALEDQGLGWKSKFGTGFGADAITGGPEVTWSQTPTQWSNSFFKNLFENEWELTNSPAGAKQWRAKNGQATIPDPFDKSKKRVPTMLTTDLSLRFDPAYEKISRRFYENPDQFADAFARAWFKLTHRDMGPIARYLGPLVPKETLLWQDPIPPVDHPLIDENDASALKAKILASGLSTSDLVSTAWASASTFRGSDKRGGANGARIRLAPQKDWEVNQPKQLAKVLEKLETIGKEFGKKVSLADLIVLGGDAAIEKAAKDAGVEVKIPFTPGRMDASQEQTDVASFAPLEPKADGFRNYIGRKTQFLQPEEALVDRAQLLRLTGPEMTVLVGGLRVLGANTAGSKHGVFTATPGVLTNDFFVNLLDMRTHWQPAGGEEGVYEGRDRKTNALKWTGTRVDLIFGSHSQLRAFAEVYAWAGSKEKFVKDFAAAWNKVMNLDRYDVARTGETKKAAVV.

Positions 1–22 (MEKQSNDAAVAGAPNDHGAAKC) are disordered. Positions 105 to 227 (WHSAGTYRIT…LGAVQMGLIY (123 aa)) form a cross-link, tryptophyl-tyrosyl-methioninium (Trp-Tyr) (with M-253). Residue His-106 is the Proton acceptor of the active site. Residues 227–253 (YVNPEGPNGNPDPVAAAKDIRETFFRM) constitute a cross-link (tryptophyl-tyrosyl-methioninium (Tyr-Met) (with W-105)). His-268 serves as a coordination point for heme b.

This sequence belongs to the peroxidase family. Peroxidase/catalase subfamily. As to quaternary structure, homodimer or homotetramer. It depends on heme b as a cofactor. Post-translationally, formation of the three residue Trp-Tyr-Met cross-link is important for the catalase, but not the peroxidase activity of the enzyme.

The catalysed reaction is H2O2 + AH2 = A + 2 H2O. The enzyme catalyses 2 H2O2 = O2 + 2 H2O. In terms of biological role, bifunctional enzyme with both catalase and broad-spectrum peroxidase activity. This Solibacter usitatus (strain Ellin6076) protein is Catalase-peroxidase.